We begin with the raw amino-acid sequence, 145 residues long: Antiholin-like protein LrgA (145 aa).

A run of 4 helical transmembrane segments spans residues 10–30, 33–53, 72–92, and 96–116; these read PAHFFHQVIVIALVLFVSKII, FMPIPMPASVIGLVLLFVLLC, NIGLLFVPAGISVVNSLGVIS, and FLIIGLIIVSTILLLICTGYV.

It belongs to the CidA/LrgA family. LrgA subfamily.

The protein localises to the cell membrane. In terms of biological role, inhibits the expression or activity of extracellular murein hydrolases by interacting, possibly with LrgB, with the holin-like proteins CidA and/or CidB. The LrgAB and CidAB proteins may affect the proton motive force of the membrane. May be involved in programmed cell death (PCD), possibly triggering PCD in response to antibiotics and environmental stresses. In Staphylococcus aureus (strain JH1), this protein is Antiholin-like protein LrgA.